A 1141-amino-acid chain; its full sequence is cGMP-inhibited 3',5'-cyclic phosphodiesterase 3A (1141 aa).

The segment at 1–42 is disordered; that stretch reads MAVRGEAAQDLAKPGLGGASPARVARGNHRHRGESSPSPRGS. The chain crosses the membrane as a helical span at residues 62-82; that stretch reads SALCAGSLSVLLALLVRLVGG. A disordered region spans residues 90–111; the sequence is KSQEAAAEEEEEEGARGGVFPG. Transmembrane regions (helical) follow at residues 127–147, 157–177, 182–202, 207–227, and 229–249; these read LQPA…GLCL, AVAL…SLGV, LLSL…TWLV, LGVL…VSLE, and FKVA…LLLA. Residue Ser310 is modified to Phosphoserine. Residues 433–445 show a composition bias toward low complexity; sequence RVSSTWTTTTSAT. Residues 433–483 form a disordered region; the sequence is RVSSTWTTTTSATGLPTLEPAPVRRDRSASIKPHEAPSPSAVNPDSWNAPG. Over residues 454 to 467 the composition is skewed to basic and acidic residues; the sequence is PVRRDRSASIKPHE. Positions 472–483 are enriched in polar residues; it reads SAVNPDSWNAPG. Ser492, Ser520, Ser524, and Ser533 each carry phosphoserine. Residues 505 to 654 are disordered; that stretch reads VKAKKQNRPG…CQREPQRKAS (150 aa). Residues 522–532 are compositionally biased toward pro residues; that stretch reads VPSPSSSPPQG. The span at 533–544 shows a compositional bias: low complexity; sequence SPASSPVSNSAS. Residues 618–637 show a composition bias toward polar residues; sequence TSQVTSDYETNNNSDSSDIL. The tract at residues 669–1141 is interaction with SLFN12; the sequence is KPILAPEPLV…EETLAPQPDL (473 aa). The PDEase domain occupies 674–1093; sequence PEPLVMDNLD…MMWKKVIEEE (420 aa). His752 acts as the Proton donor in catalysis. Residue His752 coordinates AMP. Mn(2+) is bound by residues His756, His836, Asp837, and Asp950. AMP is bound by residues Asp837, Asp950, and Gln1001. Position 837 (Asp837) interacts with Mg(2+). Disordered stretches follow at residues 1024–1060 and 1120–1141; these read GKWV…SSIA and KEEE…QPDL. Positions 1029–1046 are enriched in acidic residues; that stretch reads DSDDSGDTDDPEEEEEEA. Phosphoserine is present on Ser1033. Thr1036 bears the Phosphothreonine mark. Residue Lys1120 forms a Glycyl lysine isopeptide (Lys-Gly) (interchain with G-Cter in SUMO2) linkage.

This sequence belongs to the cyclic nucleotide phosphodiesterase family. PDE3 subfamily. Mn(2+) is required as a cofactor. It depends on Mg(2+) as a cofactor.

It localises to the membrane. The protein localises to the cytoplasm. Its subcellular location is the cytosol. The enzyme catalyses a nucleoside 3',5'-cyclic phosphate + H2O = a nucleoside 5'-phosphate + H(+). It catalyses the reaction 3',5'-cyclic AMP + H2O = AMP + H(+). The catalysed reaction is 3',5'-cyclic GMP + H2O = GMP + H(+). It carries out the reaction 3',5'-cyclic UMP + H2O = UMP + H(+). Its activity is regulated as follows. Inhibited by cGMP. Its function is as follows. Cyclic nucleotide phosphodiesterase with specificity for the second messengers cAMP and cGMP, which are key regulators of many important physiological processes. Also has activity toward cUMP. Independently of its catalytic activity it is part of an E2/17beta-estradiol-induced pro-apoptotic signaling pathway. E2 stabilizes the PDE3A/SLFN12 complex in the cytosol, promoting the dephosphorylation of SLFN12 and activating its pro-apoptotic ribosomal RNA/rRNA ribonuclease activity. This apoptotic pathway might be relevant in tissues with high concentration of E2 and be for instance involved in placenta remodeling. The protein is cGMP-inhibited 3',5'-cyclic phosphodiesterase 3A of Mus musculus (Mouse).